Here is a 962-residue protein sequence, read N- to C-terminus: Protein kinase ORF73 (962 aa).

2 disordered regions span residues 1 to 28 (MADR…NDRP) and 62 to 152 (STPA…RATT). Acidic residues predominate over residues 81 to 90 (DSDDDDEEDN). Residues 143–152 (YDTTGRRATT) show a composition bias toward polar residues. Residues 301 to 595 (LRAAPVLGKG…ASDLLKSPRY (295 aa)) enclose the Protein kinase domain. Residues 307 to 315 (LGKGYFGTV) and K324 contribute to the ATP site. The active-site Proton acceptor is D434.

Belongs to the protein kinase superfamily. Ser/Thr protein kinase family.

The catalysed reaction is L-seryl-[protein] + ATP = O-phospho-L-seryl-[protein] + ADP + H(+). It carries out the reaction L-threonyl-[protein] + ATP = O-phospho-L-threonyl-[protein] + ADP + H(+). The protein is Protein kinase ORF73 (ORF73) of Ictaluridae (bullhead catfishes).